A 539-amino-acid polypeptide reads, in one-letter code: Alpha-aminoadipic semialdehyde dehydrogenase (539 aa).

A mitochondrion-targeting transit peptide spans 1-26 (MWRVPGLLCVRVARKSKFSGSWNRPA). At Lys94 the chain carries N6-acetyllysine; alternate. Lys94 bears the N6-succinyllysine; alternate mark. NAD(+) is bound by residues 192-194 (TAF), Lys218, 258-259 (GT), 274-275 (GS), 274-279 (GSTQVG), and 296-297 (EL). Glu296 (proton acceptor) is an active-site residue. Catalysis depends on Cys330, which acts as the Nucleophile. Thr331 contributes to the (S)-2-amino-6-oxohexanoate binding site. Glu427 lines the NAD(+) pocket. An N6-acetyllysine modification is found at Lys462. Positions 489 and 490 each coordinate (S)-2-amino-6-oxohexanoate. An N6-acetyllysine modification is found at Lys500. Position 537 is an N6-succinyllysine (Lys537).

This sequence belongs to the aldehyde dehydrogenase family. As to quaternary structure, homotetramer.

The protein resides in the cytoplasm. Its subcellular location is the cytosol. The protein localises to the nucleus. It is found in the mitochondrion. It catalyses the reaction nonanal + NAD(+) + H2O = nonanoate + NADH + 2 H(+). It carries out the reaction (S)-2-amino-6-oxohexanoate + NAD(+) + H2O = L-2-aminoadipate + NADH + 2 H(+). The catalysed reaction is betaine aldehyde + NAD(+) + H2O = glycine betaine + NADH + 2 H(+). The enzyme catalyses an aldehyde + NAD(+) + H2O = a carboxylate + NADH + 2 H(+). It catalyses the reaction hexanal + NAD(+) + H2O = hexanoate + NADH + 2 H(+). It carries out the reaction octanal + NAD(+) + H2O = octanoate + NADH + 2 H(+). The catalysed reaction is (E)-non-2-enal + NAD(+) + H2O = (E)-non-2-enoate + NADH + 2 H(+). The enzyme catalyses (E)-4-hydroxynon-2-enal + NAD(+) + H2O = (E)-4-hydroxynon-2-enoate + NADH + 2 H(+). It participates in amine and polyamine biosynthesis; betaine biosynthesis via choline pathway; betaine from betaine aldehyde: step 1/1. Multifunctional enzyme mediating important protective effects. Metabolizes betaine aldehyde to betaine, an important cellular osmolyte and methyl donor. Protects cells from oxidative stress by metabolizing a number of lipid peroxidation-derived aldehydes. Involved in lysine catabolism. This Bos taurus (Bovine) protein is Alpha-aminoadipic semialdehyde dehydrogenase (ALDH7A1).